The primary structure comprises 618 residues: MADEGKSYNEHDDRVSFPQRRKKGRGPFRWKCGVGNRRSGRGGSGIRSSRFEEDDGDVAMNDPQDGPRVRFNPYTTRPNRRRDTWHDRDRIHVTVRRDRAPQERGGAGTSQDGTTKNWFKITIPYGKKYDKMWLLSMIQSKCSVPFNPIEFHYENTRAHFFVENATTASALKAVNYKIQDRENGRISIIINSSAPPYIVQNELKPEQVEQLKLIMSKRYDGSQQALDLKGLRSDPDLVAQNIDVVLNRRGCMAAALRIIEENIPELLSLNLSNNRLYKLDDMSSIVQKAPNLKILNLSGNELKSEWELDKIKGLKLEELWLDRNPMCDTFLDQSTYISTIRERFPKLLRLDGHELPPPIAFDVEAPTMLPPCKGSYFGTENLKSLVLHFLQQYYAIYDSGDRQGLLDAYHDGACCSLSTPSNPQNPVRHNLAKYFNDSRNVKKIKDTTTRFRLLKHTRLNVVAFLNELPKTHHDVNSFVVDISAQTSTLLCFSVNGVFKEVDGKSRDSLRAFTRTFIAVPASNSGLCIVNDELFVRNASPEEIQRAFAMPAPTPSSSPVPTLSQEQQDMLQAFSTQSGMNLEWSQKCLQDNNWDYTRSAQAFTHLKAKGEIPEVAFMK.

A compositionally biased stretch (basic and acidic residues) spans 1-15; the sequence is MADEGKSYNEHDDRV. The interval 1–113 is disordered; that stretch reads MADEGKSYNE…RGGAGTSQDG (113 aa). Alanine 2 bears the N-acetylalanine mark. Residues 2-59 are minor non-specific RNA-binding; that stretch reads ADEGKSYNEHDDRVSFPQRRKKGRGPFRWKCGVGNRRSGRGGSGIRSSRFEEDDGDVA. Positions 2-117 are RNA-binding (RBD); the sequence is ADEGKSYNEH…GTSQDGTTKN (116 aa). Positions 2 to 197 are interaction with ALYREF/THOC4 and LUZP4; it reads ADEGKSYNEH…IIINSSAPPY (196 aa). Over residues 19-28 the composition is skewed to basic residues; that stretch reads QRRKKGRGPF. Residue arginine 41 is modified to Asymmetric dimethylarginine; alternate. Arginine 41 bears the Omega-N-methylarginine; alternate mark. Residues 60 to 117 form a major non-specific RNA-binding region; it reads MNDPQDGPRVRFNPYTTRPNRRRDTWHDRDRIHVTVRRDRAPQERGGAGTSQDGTTKN. The segment at 60-117 is RNA binding; sequence MNDPQDGPRVRFNPYTTRPNRRRDTWHDRDRIHVTVRRDRAPQERGGAGTSQDGTTKN. The Nuclear localization signal motif lies at 66–99; the sequence is GPRVRFNPYTTRPNRRRDTWHDRDRIHVTVRRDR. The segment covering 81–102 has biased composition (basic and acidic residues); that stretch reads RRDTWHDRDRIHVTVRRDRAPQ. Residues 82–109 carry the Nuclear export signal motif; sequence RDTWHDRDRIHVTVRRDRAPQERGGAGT. The RRM domain occupies 118-197; it reads WFKITIPYGK…IIINSSAPPY (80 aa). 3'-nitrotyrosine is present on tyrosine 125. LRR repeat units follow at residues 265–290, 291–314, 315–342, and 343–370; these read ELLS…QKAP, NLKI…IKGL, KLEE…TIRE, and RFPK…TMLP. The NTF2 domain maps to 385–535; it reads LVLHFLQQYY…LCIVNDELFV (151 aa). One can recognise a TAP-C domain in the interval 564–618; the sequence is QEQQDMLQAFSTQSGMNLEWSQKCLQDNNWDYTRSAQAFTHLKAKGEIPEVAFMK.

This sequence belongs to the NXF family. Heterodimer (via NTF2 domain) with NXT1. The formation of NXF1-NXT1 heterodimers is required for the NXF1-mediated nuclear mRNA export. Forms a complex with RANBP2/NUP358, NXT1 and RANGAP1. Associates with the exon junction complex (EJC). Associates with the transcription/export (TREX) complex. Found in a mRNA complex with UPF3A and UPF3B. Found in a post-splicing complex with RBM8A, UPF1, UPF2, UPF3A, UPF3B and RNPS1. Interacts (via N-terminus) with DHX9 (via N-terminus); this interaction is direct and negatively regulates NXF1-mediated nuclear export of constitutive transport element (CTE)-containing cellular mRNAs. Interacts with FYTTD1/UIF. Interacts with EIF4A3. Interacts with NUP42. Interacts with ALYREF/THOC4. Interacts with CHTOP. Interacts with FRG1 (via N-terminus). Interacts with LUZP4. Interacts with FMR1; the interaction occurs in a mRNA-dependent and polyribosomes-independent manner in the nucleus. Interacts with CPSF6 (via N-terminus); this interaction is direct. Interacts with RBM15. Interacts with RBM15B. Interacts with MCM3AP; this interaction is not mediated by RNA. Interacts with DDX3X (via C-terminus); this interaction may be partly involved in DDX3X nuclear export and in NXF1 localization to stress granules. Interacts with PABPC1/PABP1.

The protein localises to the nucleus. The protein resides in the nucleoplasm. It is found in the nucleus speckle. Its subcellular location is the nuclear pore complex. It localises to the nucleus envelope. The protein localises to the cytoplasm. The protein resides in the stress granule. In terms of biological role, involved in the nuclear export of mRNA species bearing retroviral constitutive transport elements (CTE) and in the export of mRNA from the nucleus to the cytoplasm (TAP/NFX1 pathway). The NXF1-NXT1 heterodimer is involved in the export of HSP70 mRNA in conjunction with ALYREF/THOC4 and THOC5 components of the TREX complex. ALYREF/THOC4-bound mRNA is thought to be transferred to the NXF1-NXT1 heterodimer for export. Also involved in nuclear export of m6A-containing mRNAs: interaction between SRSF3 and YTHDC1 facilitates m6A-containing mRNA-binding to both SRSF3 and NXF1, promoting mRNA nuclear export. In Rattus norvegicus (Rat), this protein is Nuclear RNA export factor 1 (Nxf1).